Here is a 390-residue protein sequence, read N- to C-terminus: 4-hydroxy-3-methylbut-2-en-1-yl diphosphate synthase (flavodoxin) (390 aa).

C281, C284, C316, and E323 together coordinate [4Fe-4S] cluster.

The protein belongs to the IspG family. [4Fe-4S] cluster serves as cofactor.

It carries out the reaction (2E)-4-hydroxy-3-methylbut-2-enyl diphosphate + oxidized [flavodoxin] + H2O + 2 H(+) = 2-C-methyl-D-erythritol 2,4-cyclic diphosphate + reduced [flavodoxin]. It functions in the pathway isoprenoid biosynthesis; isopentenyl diphosphate biosynthesis via DXP pathway; isopentenyl diphosphate from 1-deoxy-D-xylulose 5-phosphate: step 5/6. In terms of biological role, converts 2C-methyl-D-erythritol 2,4-cyclodiphosphate (ME-2,4cPP) into 1-hydroxy-2-methyl-2-(E)-butenyl 4-diphosphate. The sequence is that of 4-hydroxy-3-methylbut-2-en-1-yl diphosphate synthase (flavodoxin) from Salinispora arenicola (strain CNS-205).